The following is a 61-amino-acid chain: Small ribosomal subunit protein bS21 (61 aa).

The segment at Glu36–Arg61 is disordered. Basic residues predominate over residues Val43 to Arg61.

The protein belongs to the bacterial ribosomal protein bS21 family.

The polypeptide is Small ribosomal subunit protein bS21 (rpsU) (Caldanaerobacter subterraneus subsp. tengcongensis (strain DSM 15242 / JCM 11007 / NBRC 100824 / MB4) (Thermoanaerobacter tengcongensis)).